Here is a 145-residue protein sequence, read N- to C-terminus: Cell wall teichoic acid glycosylation protein GtcA (145 aa).

The next 4 helical transmembrane spans lie at isoleucine 21–leucine 41, isoleucine 52–asparagine 69, phenylalanine 96–asparagine 116, and lysine 121–phenylalanine 141.

Belongs to the GtrA family.

The protein resides in the cell membrane. Involved in the decoration of cell wall teichoic acid with galactose and glucose. The polypeptide is Cell wall teichoic acid glycosylation protein GtcA (gtcA) (Listeria monocytogenes serovar 1/2a (strain ATCC BAA-679 / EGD-e)).